The chain runs to 132 residues: Small ribosomal subunit protein uS8c (132 aa).

It belongs to the universal ribosomal protein uS8 family. As to quaternary structure, part of the 30S ribosomal subunit.

The protein localises to the plastid. It is found in the chloroplast. Its function is as follows. One of the primary rRNA binding proteins, it binds directly to 16S rRNA central domain where it helps coordinate assembly of the platform of the 30S subunit. The polypeptide is Small ribosomal subunit protein uS8c (rps8) (Pinus thunbergii (Japanese black pine)).